Here is a 466-residue protein sequence, read N- to C-terminus: DNA repair protein RadA (466 aa).

The segment at 12–29 (CSECQHVAPKWVGRCANC) adopts a C4-type zinc-finger fold. Position 100 to 107 (100 to 107 (GDPGVGKS)) interacts with ATP. Residues 261–265 (KNRFG) carry the RadA KNRFG motif motif. The lon-protease-like stretch occupies residues 359–466 (DLYLSTVGGM…MREIAIAGAQ (108 aa)).

This sequence belongs to the RecA family. RadA subfamily. In terms of assembly, interacts with DisA.

Functionally, DNA-dependent ATPase involved in processing of recombination intermediates, plays a role in repairing DNA breaks. Stimulates the branch migration of RecA-mediated strand transfer reactions, allowing the 3' invading strand to extend heteroduplex DNA faster. Binds ssDNA in the presence of ADP but not other nucleotides, has ATPase activity that is stimulated by ssDNA and various branched DNA structures, but inhibited by SSB. Does not have RecA's homology-searching function. Also inhibits the diadenylate cyclase activity of DisA. The polypeptide is DNA repair protein RadA (Mycolicibacterium smegmatis (strain ATCC 700084 / mc(2)155) (Mycobacterium smegmatis)).